The chain runs to 156 residues: Cyclic pyranopterin monophosphate synthase (156 aa).

Substrate-binding positions include 75–77 (LCH) and 111–112 (ME). Asp126 is an active-site residue.

Belongs to the MoaC family. As to quaternary structure, homohexamer; trimer of dimers.

It carries out the reaction (8S)-3',8-cyclo-7,8-dihydroguanosine 5'-triphosphate = cyclic pyranopterin phosphate + diphosphate. The protein operates within cofactor biosynthesis; molybdopterin biosynthesis. Functionally, catalyzes the conversion of (8S)-3',8-cyclo-7,8-dihydroguanosine 5'-triphosphate to cyclic pyranopterin monophosphate (cPMP). This Corynebacterium glutamicum (strain R) protein is Cyclic pyranopterin monophosphate synthase.